The following is a 330-amino-acid chain: Phosphate acyltransferase (330 aa).

It belongs to the PlsX family. In terms of assembly, homodimer. Probably interacts with PlsY.

Its subcellular location is the cytoplasm. It carries out the reaction a fatty acyl-[ACP] + phosphate = an acyl phosphate + holo-[ACP]. The protein operates within lipid metabolism; phospholipid metabolism. Functionally, catalyzes the reversible formation of acyl-phosphate (acyl-PO(4)) from acyl-[acyl-carrier-protein] (acyl-ACP). This enzyme utilizes acyl-ACP as fatty acyl donor, but not acyl-CoA. The protein is Phosphate acyltransferase of Bacillus cereus (strain G9842).